Reading from the N-terminus, the 335-residue chain is ATP-dependent 6-phosphofructokinase (335 aa).

Residue glycine 11 participates in ATP binding. 21–25 provides a ligand contact to ADP; the sequence is RAVVR. Residues 72–73 and 102–105 contribute to the ATP site; these read RY and GDGS. Aspartate 103 is a binding site for Mg(2+). A substrate-binding site is contributed by 125–127; the sequence is TID. Aspartate 127 serves as the catalytic Proton acceptor. An ADP-binding site is contributed by arginine 154. Residues arginine 162 and 169-171 contribute to the substrate site; that span reads MGR. Residues 185 to 187 and 213 to 215 each bind ADP; these read GAD and KKH. Substrate is bound by residues glutamate 222, arginine 244, and 250-253; that span reads HIQR.

The protein belongs to the phosphofructokinase type A (PFKA) family. ATP-dependent PFK group I subfamily. Prokaryotic clade 'B1' sub-subfamily. Homotetramer. Mg(2+) is required as a cofactor.

It localises to the cytoplasm. The catalysed reaction is beta-D-fructose 6-phosphate + ATP = beta-D-fructose 1,6-bisphosphate + ADP + H(+). The protein operates within carbohydrate degradation; glycolysis; D-glyceraldehyde 3-phosphate and glycerone phosphate from D-glucose: step 3/4. Allosterically activated by ADP and other diphosphonucleosides, and allosterically inhibited by phosphoenolpyruvate. Catalyzes the phosphorylation of D-fructose 6-phosphate to fructose 1,6-bisphosphate by ATP, the first committing step of glycolysis. The sequence is that of ATP-dependent 6-phosphofructokinase from Streptococcus pneumoniae serotype 4 (strain ATCC BAA-334 / TIGR4).